A 486-amino-acid chain; its full sequence is Malonate-semialdehyde dehydrogenase 2 (486 aa).

NAD(+)-binding residues include Phe-154, Lys-178, Glu-181, Arg-182, and Ser-231. The Nucleophile role is filled by Cys-286. Glu-385 serves as a coordination point for NAD(+).

This sequence belongs to the aldehyde dehydrogenase family. IolA subfamily. As to quaternary structure, homotetramer.

It carries out the reaction 3-oxopropanoate + NAD(+) + CoA + H2O = hydrogencarbonate + acetyl-CoA + NADH + H(+). It catalyses the reaction 2-methyl-3-oxopropanoate + NAD(+) + CoA + H2O = propanoyl-CoA + hydrogencarbonate + NADH + H(+). It participates in polyol metabolism; myo-inositol degradation into acetyl-CoA; acetyl-CoA from myo-inositol: step 7/7. Its function is as follows. Catalyzes the oxidation of malonate semialdehyde (MSA) and methylmalonate semialdehyde (MMSA) into acetyl-CoA and propanoyl-CoA, respectively. Is involved in a myo-inositol catabolic pathway. Bicarbonate, and not CO2, is the end-product of the enzymatic reaction. The chain is Malonate-semialdehyde dehydrogenase 2 from Shouchella clausii (strain KSM-K16) (Alkalihalobacillus clausii).